Consider the following 202-residue polypeptide: Cytochrome c oxidase assembly protein CtaG (202 aa).

Residues 1-14 (MTSPANPSEVTRDR) are Cytoplasmic-facing. A helical; Signal-anchor for type II membrane protein transmembrane segment spans residues 15–37 (RNRGVAFVCAGVFVAMVGMSFAA). Residues 38 to 202 (VPLYRLFCQV…GAAKTQKLGG (165 aa)) are Periplasmic-facing.

This sequence belongs to the COX11/CtaG family.

Its subcellular location is the cell inner membrane. Its function is as follows. Exerts its effect at some terminal stage of cytochrome c oxidase synthesis, probably by being involved in the insertion of the copper B into subunit I. This is Cytochrome c oxidase assembly protein CtaG from Chelativorans sp. (strain BNC1).